We begin with the raw amino-acid sequence, 325 residues long: MIARIWSGESSLWRLLLPLSWLYGLVSGAIRLSYKLGLKRAWRAPVPVVVVGNLTAGGNGKTPVVIWLVEKLQQRGVRVGVVSRGYGGKAAAYPLLLTPETTTAEAGDEPVLIYQRTGAPVAVAPERAAAVKAILAAHNVQIIITDDGLQHYRLARDIEIVVIDGVRRFGNGWWLPAGPMRERASRLKTVDAAIVNGGVARAGEIPMQLAPGLAVNLRTGARCDVAQLSNIVAMAGIGHPPRFFATLEACGAHPQKCVPLADHQTLAPADVQALVGEGQTLVMTEKDAVKCRAFAEDNWWFLPVDARLSGEQPDKLLEHITSLVR.

Residue 55-62 (TAGGNGKT) coordinates ATP.

The protein belongs to the LpxK family.

It carries out the reaction a lipid A disaccharide + ATP = a lipid IVA + ADP + H(+). Its pathway is glycolipid biosynthesis; lipid IV(A) biosynthesis; lipid IV(A) from (3R)-3-hydroxytetradecanoyl-[acyl-carrier-protein] and UDP-N-acetyl-alpha-D-glucosamine: step 6/6. Functionally, transfers the gamma-phosphate of ATP to the 4'-position of a tetraacyldisaccharide 1-phosphate intermediate (termed DS-1-P) to form tetraacyldisaccharide 1,4'-bis-phosphate (lipid IVA). The polypeptide is Tetraacyldisaccharide 4'-kinase (Salmonella paratyphi A (strain ATCC 9150 / SARB42)).